The chain runs to 323 residues: Acetyl-coenzyme A carboxylase carboxyl transferase subunit alpha (323 aa).

The CoA carboxyltransferase C-terminal domain maps to 39 to 293 (RLSKKSQQLT…RRALADSLRQ (255 aa)).

It belongs to the AccA family. As to quaternary structure, acetyl-CoA carboxylase is a heterohexamer composed of biotin carboxyl carrier protein (AccB), biotin carboxylase (AccC) and two subunits each of ACCase subunit alpha (AccA) and ACCase subunit beta (AccD).

It localises to the cytoplasm. The enzyme catalyses N(6)-carboxybiotinyl-L-lysyl-[protein] + acetyl-CoA = N(6)-biotinyl-L-lysyl-[protein] + malonyl-CoA. The protein operates within lipid metabolism; malonyl-CoA biosynthesis; malonyl-CoA from acetyl-CoA: step 1/1. In terms of biological role, component of the acetyl coenzyme A carboxylase (ACC) complex. First, biotin carboxylase catalyzes the carboxylation of biotin on its carrier protein (BCCP) and then the CO(2) group is transferred by the carboxyltransferase to acetyl-CoA to form malonyl-CoA. The sequence is that of Acetyl-coenzyme A carboxylase carboxyl transferase subunit alpha from Burkholderia vietnamiensis (strain G4 / LMG 22486) (Burkholderia cepacia (strain R1808)).